The following is a 351-amino-acid chain: Probable protein phosphatase 2C 41 (351 aa).

In terms of domain architecture, PPM-type phosphatase spans 62 to 348 (FTSICSNRGE…DDISVLCLFF (287 aa)). Residues aspartate 98, glycine 99, aspartate 293, and aspartate 339 each contribute to the Mn(2+) site.

Belongs to the PP2C family. Mg(2+) is required as a cofactor. It depends on Mn(2+) as a cofactor.

The catalysed reaction is O-phospho-L-seryl-[protein] + H2O = L-seryl-[protein] + phosphate. It catalyses the reaction O-phospho-L-threonyl-[protein] + H2O = L-threonyl-[protein] + phosphate. This chain is Probable protein phosphatase 2C 41, found in Arabidopsis thaliana (Mouse-ear cress).